Consider the following 119-residue polypeptide: Holo-[acyl-carrier-protein] synthase (119 aa).

D8 and E58 together coordinate Mg(2+).

The protein belongs to the P-Pant transferase superfamily. AcpS family. It depends on Mg(2+) as a cofactor.

It localises to the cytoplasm. The enzyme catalyses apo-[ACP] + CoA = holo-[ACP] + adenosine 3',5'-bisphosphate + H(+). Its function is as follows. Transfers the 4'-phosphopantetheine moiety from coenzyme A to a Ser of acyl-carrier-protein. The protein is Holo-[acyl-carrier-protein] synthase of Bacillus cereus (strain B4264).